A 421-amino-acid chain; its full sequence is Chitin deacetylase (421 aa).

An N-terminal signal peptide occupies residues 1-21 (MQIKTFALSAAIAQVATLALA). Residues N39, N70, N87, and N106 are each glycosylated (N-linked (GlcNAc...) asparagine). The 193-residue stretch at 157-349 (ETWGLTYDDG…YKQVIDVATC (193 aa)) folds into the NodB homology domain. D164 acts as the Proton acceptor in catalysis. Position 164 (D164) interacts with acetate. D165 contributes to the Co(2+) binding site. A glycan (N-linked (GlcNAc...) asparagine) is linked at N168. Co(2+) is bound by residues H214 and H218. Y255 is a binding site for acetate. The N-linked (GlcNAc...) asparagine glycan is linked to N307. H320 serves as the catalytic Proton donor. Residues N323, N351, and N367 are each glycosylated (N-linked (GlcNAc...) asparagine). T390 carries GPI-anchor amidated threonine lipidation. The propeptide at 391–421 (AAAHIQASTSGAMSVLPNLALISAFIATLLF) is removed in mature form.

It belongs to the polysaccharide deacetylase family. Co(2+) serves as cofactor.

The protein localises to the secreted. It localises to the cell wall. It is found in the cell membrane. The catalysed reaction is [(1-&gt;4)-N-acetyl-beta-D-glucosaminyl](n) + n H2O = chitosan + n acetate. Functionally, hydrolyzes the N-acetamido groups of N-acetyl-D-glucosamine residues in chitin to form chitosan and acetate. This Amylomyces rouxii (Filamentous fungus) protein is Chitin deacetylase.